The sequence spans 134 residues: Nogalonic acid methyl ester cyclase (134 aa).

Q95 provides a ligand contact to nogalaviketone. The active-site Proton donor/acceptor is the D111.

Belongs to the polyketide cyclase DnrD family. As to quaternary structure, homotetramer. Dimer of dimers.

It carries out the reaction nogalaviketone = methyl nogalonate. It participates in antibiotic biosynthesis. In terms of biological role, involved in the biosynthesis of the aromatic polyketide antibiotic nogalamycin. Catalyzes the formation of nogalaviketone from nogalonic acid methyl ester (NAME), the last ring-closure step in the biosynthesis of nogalamycin. The chain is Nogalonic acid methyl ester cyclase from Streptomyces nogalater.